The following is a 507-amino-acid chain: Variant surface glycoprotein ILTAT 1.25 (507 aa).

A signal peptide spans 1-21 (MQSQQQPVFISIILLAINTDA). A compositionally biased stretch (basic and acidic residues) spans 83 to 95 (EPEAAPKESRSDE). Residues 83–102 (EPEAAPKESRSDETPEACKA) are disordered. N141 and N371 each carry an N-linked (GlcNAc...) asparagine glycan. The segment covering 384-395 (PTKQPPAKAAAA) has biased composition (low complexity). Residues 384-474 (PTKQPPAKAA…KKEEECKSPN (91 aa)) are disordered. Residues 396-420 (PEKKSNPQKDCNKNTKKRDCKEGDG) are compositionally biased toward basic and acidic residues. Positions 444 to 455 (SAAGAGDAGASD) are enriched in low complexity. The span at 456-474 (TEAKKCSDKKKEEECKSPN) shows a compositional bias: basic and acidic residues. D484 carries GPI-anchor amidated aspartate lipidation. Residues 485–507 (SSILANKQFALSVASAAFVALLF) constitute a propeptide, removed in mature form.

It is found in the cell membrane. In terms of biological role, VSG forms a coat on the surface of the parasite. The trypanosome evades the immune response of the host by expressing a series of antigenically distinct VSGs from an estimated 1000 VSG genes. In Trypanosoma brucei brucei, this protein is Variant surface glycoprotein ILTAT 1.25.